The primary structure comprises 387 residues: Succinyl-diaminopimelate desuccinylase (387 aa).

H74 lines the Zn(2+) pocket. D76 is a catalytic residue. D107 is a Zn(2+) binding site. The active-site Proton acceptor is the E142. Residues E143, E171, and H360 each contribute to the Zn(2+) site.

Belongs to the peptidase M20A family. DapE subfamily. Homodimer. Zn(2+) is required as a cofactor. It depends on Co(2+) as a cofactor.

The catalysed reaction is N-succinyl-(2S,6S)-2,6-diaminopimelate + H2O = (2S,6S)-2,6-diaminopimelate + succinate. It functions in the pathway amino-acid biosynthesis; L-lysine biosynthesis via DAP pathway; LL-2,6-diaminopimelate from (S)-tetrahydrodipicolinate (succinylase route): step 3/3. In terms of biological role, catalyzes the hydrolysis of N-succinyl-L,L-diaminopimelic acid (SDAP), forming succinate and LL-2,6-diaminopimelate (DAP), an intermediate involved in the bacterial biosynthesis of lysine and meso-diaminopimelic acid, an essential component of bacterial cell walls. The sequence is that of Succinyl-diaminopimelate desuccinylase from Rhodopseudomonas palustris (strain TIE-1).